We begin with the raw amino-acid sequence, 221 residues long: Deoxyribose-phosphate aldolase 1 (221 aa).

Asp-89 acts as the Proton donor/acceptor in catalysis. Residue Lys-152 is the Schiff-base intermediate with acetaldehyde of the active site. Lys-181 acts as the Proton donor/acceptor in catalysis.

The protein belongs to the DeoC/FbaB aldolase family. DeoC type 1 subfamily.

Its subcellular location is the cytoplasm. The enzyme catalyses 2-deoxy-D-ribose 5-phosphate = D-glyceraldehyde 3-phosphate + acetaldehyde. The protein operates within carbohydrate degradation; 2-deoxy-D-ribose 1-phosphate degradation; D-glyceraldehyde 3-phosphate and acetaldehyde from 2-deoxy-alpha-D-ribose 1-phosphate: step 2/2. Functionally, catalyzes a reversible aldol reaction between acetaldehyde and D-glyceraldehyde 3-phosphate to generate 2-deoxy-D-ribose 5-phosphate. The chain is Deoxyribose-phosphate aldolase 1 from Oceanobacillus iheyensis (strain DSM 14371 / CIP 107618 / JCM 11309 / KCTC 3954 / HTE831).